A 677-amino-acid polypeptide reads, in one-letter code: Histidine ammonia-lyase (677 aa).

Positions 269-271 form a cross-link, 5-imidazolinone (Cys-Gly); the sequence is CSG. S270 bears the 2,3-didehydroalanine (Ser) mark.

It belongs to the PAL/histidase family. In terms of processing, contains an active site 4-methylidene-imidazol-5-one (MIO), which is formed autocatalytically by cyclization and dehydration of residues Cys-Ser-Gly.

It catalyses the reaction L-histidine = trans-urocanate + NH4(+). It functions in the pathway amino-acid degradation; L-histidine degradation into L-glutamate; N-formimidoyl-L-glutamate from L-histidine: step 1/3. The chain is Histidine ammonia-lyase from Caenorhabditis elegans.